Consider the following 990-residue polypeptide: Insulin-degrading enzyme (990 aa).

Position 81 (histidine 81) interacts with Zn(2+). Glutamate 84 functions as the Proton acceptor in the catalytic mechanism. Residues histidine 85 and glutamate 162 each coordinate Zn(2+).

The protein belongs to the peptidase M16 family. It depends on Zn(2+) as a cofactor.

It carries out the reaction Degradation of insulin, glucagon and other polypeptides. No action on proteins.. Its function is as follows. Can cleave insulin and TGF-alpha. The protein is Insulin-degrading enzyme (Ide) of Drosophila melanogaster (Fruit fly).